The following is a 504-amino-acid chain: Maturase K (504 aa).

Belongs to the intron maturase 2 family. MatK subfamily.

Its subcellular location is the plastid. The protein localises to the chloroplast. Its function is as follows. Usually encoded in the trnK tRNA gene intron. Probably assists in splicing its own and other chloroplast group II introns. This is Maturase K from Thlaspi arvense (Field penny-cress).